We begin with the raw amino-acid sequence, 373 residues long: tRNA-specific 2-thiouridylase MnmA (373 aa).

ATP is bound by residues 12 to 19 (GMSGGVDS) and methionine 38. Residues 98 to 100 (NPD) are interaction with target base in tRNA. Catalysis depends on cysteine 103, which acts as the Nucleophile. The cysteines at positions 103 and 200 are disulfide-linked. Glycine 127 provides a ligand contact to ATP. Positions 150-152 (KDQ) are interaction with tRNA. Residue cysteine 200 is the Cysteine persulfide intermediate of the active site. Positions 312–313 (RY) are interaction with tRNA.

This sequence belongs to the MnmA/TRMU family.

Its subcellular location is the cytoplasm. The enzyme catalyses S-sulfanyl-L-cysteinyl-[protein] + uridine(34) in tRNA + AH2 + ATP = 2-thiouridine(34) in tRNA + L-cysteinyl-[protein] + A + AMP + diphosphate + H(+). Catalyzes the 2-thiolation of uridine at the wobble position (U34) of tRNA, leading to the formation of s(2)U34. The polypeptide is tRNA-specific 2-thiouridylase MnmA (Streptococcus pyogenes serotype M49 (strain NZ131)).